A 162-amino-acid polypeptide reads, in one-letter code: Class I hydrophobin dewC (162 aa).

The N-terminal stretch at 1–21 (MQFTIASLIATAVLGLQMASA) is a signal peptide. 4 disulfides stabilise this stretch: Cys43–Cys119, Cys50–Cys113, Cys51–Cys90, and Cys120–Cys156.

The protein belongs to the fungal hydrophobin family. As to quaternary structure, self-assembles to form functional amyloid fibrils called rodlets. Self-assembly into fibrillar rodlets occurs spontaneously at hydrophobic:hydrophilic interfaces and the rodlets further associate laterally to form amphipathic monolayers.

It is found in the secreted. The protein resides in the spore wall. In terms of biological role, aerial growth, conidiation, and dispersal of filamentous fungi in the environment rely upon a capability of their secreting small amphipathic proteins called hydrophobins (HPBs) with low sequence identity. Class I can self-assemble into an outermost layer of rodlet bundles on aerial cell surfaces, conferring cellular hydrophobicity that supports fungal growth, development and dispersal; whereas Class II form highly ordered films at water-air interfaces through intermolecular interactions but contribute nothing to the rodlet structure. DewC is a class I hydrophobin that contributes to the hydrophobicity of the spore surface. The chain is Class I hydrophobin dewC from Emericella nidulans (strain FGSC A4 / ATCC 38163 / CBS 112.46 / NRRL 194 / M139) (Aspergillus nidulans).